An 81-amino-acid chain; its full sequence is Sulfur carrier protein TusA (81 aa).

Cys19 (cysteine persulfide intermediate) is an active-site residue.

This sequence belongs to the sulfur carrier protein TusA family.

The protein localises to the cytoplasm. Sulfur carrier protein which probably makes part of a sulfur-relay system. In Shewanella frigidimarina (strain NCIMB 400), this protein is Sulfur carrier protein TusA.